A 452-amino-acid chain; its full sequence is Tripartite motif-containing protein 49 (452 aa).

An RING-type zinc finger spans residues Cys15–Thr56. The B box-type zinc finger occupies Ser88 to Ile129. The Zn(2+) site is built by Cys93, His96, Cys115, and His121. One can recognise a B30.2/SPRY domain in the interval Glu269–Phe452.

The protein belongs to the TRIM/RBCC family. In terms of tissue distribution, preferentially expressed in testis.

This chain is Tripartite motif-containing protein 49 (TRIM49), found in Homo sapiens (Human).